The sequence spans 291 residues: Kidney mitochondrial carrier protein 1 (291 aa).

3 Solcar repeats span residues 7–96 (KPFI…LKRL), 104–189 (ETLV…TKKH), and 198–289 (DTVY…LKKL). Helical transmembrane passes span 9 to 26 (FIYGGLASITAECGTFPI), 71 to 89 (GIAPAMLRQASYGTIKIGT), 106 to 124 (LVLNAFCGVLSGVVSSCIA), 164 to 183 (GVSLTAQRAAIVVGVELPVY), 204 to 224 (FLSSFTCGLAGALASNPVDVV), and 264 to 283 (GFWPNWLRLGPWNIIFFITY).

The protein belongs to the mitochondrial carrier (TC 2.A.29) family.

Its subcellular location is the mitochondrion inner membrane. The catalysed reaction is sulfite(in) + sulfate(out) = sulfite(out) + sulfate(in). It carries out the reaction thiosulfate(in) + sulfate(out) = thiosulfate(out) + sulfate(in). It catalyses the reaction sulfate(out) + phosphate(in) = sulfate(in) + phosphate(out). The enzyme catalyses oxalate(in) + sulfate(out) = oxalate(out) + sulfate(in). The catalysed reaction is malonate(in) + sulfate(out) = malonate(out) + sulfate(in). It carries out the reaction maleate(in) + sulfate(out) = maleate(out) + sulfate(in). It catalyses the reaction (S)-malate(in) + sulfate(out) = (S)-malate(out) + sulfate(in). The enzyme catalyses (3S)-citramalate(in) + sulfate(out) = (3S)-citramalate(out) + sulfate(in). The catalysed reaction is (3R)-citramalate(in) + sulfate(out) = (3R)-citramalate(out) + sulfate(in). It carries out the reaction sulfate(out) + succinate(in) = sulfate(in) + succinate(out). It catalyses the reaction (S,S)-tartrate(in) + sulfate(out) = (S,S)-tartrate(out) + sulfate(in). The enzyme catalyses (2R,3R)-tartrate(in) + sulfate(out) = (2R,3R)-tartrate(out) + sulfate(in). The catalysed reaction is D-aspartate(in) + sulfate(out) = D-aspartate(out) + sulfate(in). It carries out the reaction L-aspartate(in) + sulfate(out) = L-aspartate(out) + sulfate(in). It catalyses the reaction sulfate(in) = sulfate(out). The enzyme catalyses phosphate(in) = phosphate(out). The catalysed reaction is (S)-malate(out) = (S)-malate(in). Probable transporter. Its function is as follows. Antiporter that transports inorganic anions (sulfate, sulfite, thiosulfate and phosphate) and, to a lesser extent, a variety of dicarboxylates (e.g. malonate, malate and citramalate) and, even more so, aspartate. The sulfate/sulfate exchange is much higher than the phosphate/phosphate and malate/malate exchanges. The transport affinities is higher for sulfate and thiosulfate than for any other substrate. May catalyze the export of sulfite and thiosulfate (the hydrogen sulfide degradation products) from the mitochondria, thereby modulating the level of the hydrogen sulfide. Also may mediate a very low unidirectional transport of sulfate, phosphate and (S)-malate. This Xenopus laevis (African clawed frog) protein is Kidney mitochondrial carrier protein 1.